The sequence spans 524 residues: Metal transporter Nramp2 (524 aa).

A disordered region spans residues 34-58; the sequence is AYDSDDKVSIAVSDSDSEDGGGGGG. A run of 12 helical transmembrane segments spans residues 70–90, 98–118, 155–175, 179–199, 207–227, 253–273, 295–315, 341–361, 389–409, 420–440, 457–477, and 486–506; these read LWRFTGPGFLMCIAFLDPGNL, AAAGYQLLWLLLWATVMGALV, LALVGADIQEVIGSAIAIKIL, TVPLWGGVVITAFDCFIFLFL, LEAFFGVLIAVMAVSFAIMFG, AVGIVGCIIMPHNVFLHSALV, IESILALIVSFFINICVTTVF, YGTAFFPILYIWAIGLLASGQ, AMITRSFAIIPTMIVALFFDT, ALNVLQSIQIPFALIPLITLV, VISWIVTVFLMLINGYLILSF, and LVRSSLCVVLAVYLAFIVYLI.

This sequence belongs to the NRAMP (TC 2.A.55) family.

Its subcellular location is the membrane. Its function is as follows. Probable metal transporter. This is Metal transporter Nramp2 (NRAMP2) from Oryza sativa subsp. japonica (Rice).